The sequence spans 403 residues: Putative F-box protein At5g41500 (403 aa).

The region spanning 2-47 (ATTISNLPRELIEEILSRVPLRAMKAMRLTCKSWNNLSKSESFMKM) is the F-box domain.

This chain is Putative F-box protein At5g41500, found in Arabidopsis thaliana (Mouse-ear cress).